Consider the following 235-residue polypeptide: Protein GMH1 homolog (235 aa).

The Cytoplasmic segment spans residues 1–54 (MSRSFRNGFRLLKLSQMDFERAWWDMANLFRAPRRVYRSITLRKQNINRYGRED). A helical membrane pass occupies residues 55-75 (FSFIVLFSCMIVISALLWALF). Topologically, residues 76 to 88 (YMNTPKGYVTTIT) are lumenal. A helical transmembrane segment spans residues 89 to 109 (FMLFVDFGAVGVIMATMYYFI). Over 110 to 140 (AKRFLMKSNDTILSSTDYQLEWNYCFDVHCN) the chain is Cytoplasmic. The helical transmembrane segment at 141-161 (SFFPSFVLLYVIQLFLLPVIT) threads the bilayer. The Lumenal segment spans residues 162–175 (RDNFISLFMGNTLY). The chain crosses the membrane as a helical span at residues 176–196 (LVALCYYSYLTFIGYQILPFL). At 197–201 (KNTHA) the chain is on the cytoplasmic side. The chain crosses the membrane as a helical span at residues 202–222 (LLLPIPMFFIMWALSLLGFNV). At 223–235 (PKHVVDVYFGKSA) the chain is on the lumenal side.

This sequence belongs to the unc-50 family.

The protein resides in the endoplasmic reticulum membrane. In terms of biological role, has a role in meiosis. The sequence is that of Protein GMH1 homolog (mug16) from Schizosaccharomyces pombe (strain 972 / ATCC 24843) (Fission yeast).